Reading from the N-terminus, the 153-residue chain is NADPH-dependent 7-cyano-7-deazaguanine reductase (153 aa).

A disordered region spans residues 1–30; sequence MDSIETHAKQLGQQTPLPASPEAAQLDRVP. The active-site Thioimide intermediate is the Cys51. Catalysis depends on Asp58, which acts as the Proton donor. Residues 73–75 and 92–93 each bind substrate; these read VES and HE.

This sequence belongs to the GTP cyclohydrolase I family. QueF type 1 subfamily.

Its subcellular location is the cytoplasm. It carries out the reaction 7-aminomethyl-7-carbaguanine + 2 NADP(+) = 7-cyano-7-deazaguanine + 2 NADPH + 3 H(+). Its pathway is tRNA modification; tRNA-queuosine biosynthesis. Catalyzes the NADPH-dependent reduction of 7-cyano-7-deazaguanine (preQ0) to 7-aminomethyl-7-deazaguanine (preQ1). This Methylorubrum extorquens (strain CM4 / NCIMB 13688) (Methylobacterium extorquens) protein is NADPH-dependent 7-cyano-7-deazaguanine reductase.